The following is a 3083-amino-acid chain: Laminin subunit alpha-1 (3083 aa).

An N-terminal signal peptide occupies residues 1 to 24 (MRGSGTGAALLVLLASVLWVTVRS). Pyrrolidone carboxylic acid is present on Gln25. Residues 25-276 (QQRGLFPAIL…SIKDISVGGM (252 aa)) enclose the Laminin N-terminal domain. 6 cysteine pairs are disulfide-bonded: Cys277/Cys286, Cys279/Cys297, Cys299/Cys308, Cys311/Cys331, Cys334/Cys343, and Cys336/Cys368. 4 Laminin EGF-like domains span residues 277 to 333 (CICY…ECEE), 334 to 403 (CNCH…PCRP), 404 to 460 (CNCD…NCIP), and 461 to 509 (CDCR…GCSE). The N-linked (GlcNAc...) asparagine glycan is linked to Asn370. Cystine bridges form between Cys371-Cys380, Cys383-Cys401, Cys404-Cys416, Cys406-Cys434, Cys436-Cys445, Cys448-Cys458, Cys461-Cys474, Cys463-Cys478, Cys480-Cys489, and Cys492-Cys507. In terms of domain architecture, Laminin EGF-like 5; first part spans 510-519 (CFCFGVSGVC). A Laminin IV type A 1 domain is found at 523 to 715 (TWSISQVTNM…DLAVAADVEH (193 aa)). Asn672 is a glycosylation site (N-linked (GlcNAc...) asparagine). The Laminin EGF-like 5; second part domain maps to 716 to 748 (CECPQGYTGTSCEACLPGYYRVDGILFGGICQP). 32 disulfide bridges follow: Cys749–Cys758, Cys751–Cys764, Cys767–Cys776, Cys779–Cys795, Cys798–Cys813, Cys800–Cys823, Cys826–Cys835, Cys838–Cys853, Cys856–Cys870, Cys858–Cys877, Cys880–Cys889, Cys892–Cys906, Cys909–Cys921, Cys911–Cys928, Cys930–Cys939, Cys942–Cys955, Cys958–Cys970, Cys960–Cys976, Cys978–Cys987, Cys990–Cys1002, Cys1005–Cys1014, Cys1007–Cys1021, Cys1023–Cys1032, Cys1035–Cys1048, Cys1051–Cys1063, Cys1053–Cys1070, Cys1072–Cys1081, Cys1084–Cys1094, Cys1097–Cys1109, Cys1099–Cys1125, Cys1127–Cys1136, and Cys1139–Cys1154. Laminin EGF-like domains lie at 749-797 (CECH…DCQP), 798-855 (CACP…TCVP), 856-908 (CNCS…NCRA), 909-957 (CDCH…GCVP), 958-1004 (CNCS…GCTP), 1005-1050 (CDCA…GCQA), 1051-1096 (CNCS…DCVP), and 1097-1156 (CGCD…GCSP). A Cell attachment site motif is present at residues 1147–1149 (RGD). In terms of domain architecture, Laminin EGF-like 14; first part spans 1157-1166 (CFCFGLSQLC). The region spanning 1177-1368 (ITLASDQPLL…EGEAALLLEL (192 aa)) is the Laminin IV type A 2 domain. Asn1344 carries an N-linked (GlcNAc...) asparagine glycan. Positions 1369-1409 (CVCPPGTAGHSCQDCAPGYYREKLPESGGRGPRPLLAPCVP) constitute a Laminin EGF-like 14; second part domain. Disulfide bonds link Cys1410–Cys1419, Cys1412–Cys1426, Cys1429–Cys1438, Cys1441–Cys1456, Cys1459–Cys1473, Cys1461–Cys1483, Cys1486–Cys1495, Cys1498–Cys1513, Cys1516–Cys1528, Cys1518–Cys1535, Cys1537–Cys1546, and Cys1549–Cys1560. Laminin EGF-like domains lie at 1410 to 1458 (CNCN…DCTP), 1459 to 1515 (CTCP…SCQT), and 1516 to 1562 (CDCN…DCVS). A domain II and I region spans residues 1564–2123 (DDDCVGPLLN…SRARKQVASI (560 aa)). A coiled-coil region spans residues 1617 to 1691 (AKKIRAEIQL…VATLNQTARK (75 aa)). N-linked (GlcNAc...) asparagine glycans are attached at residues Asn1659, Asn1686, Asn1718, Asn1725, Asn1763, and Asn1811. Positions 1723–1809 (QQNATLELKA…QEKKLRVQEE (87 aa)) form a coiled coil. Residues 1868-1901 (KRRARDLVHRAEQHASELQSRAGALDRDLENVRN) are a coiled coil. Asn1935, Asn2026, Asn2045, and Asn2066 each carry an N-linked (GlcNAc...) asparagine glycan. 5 consecutive Laminin G-like domains span residues 2124 to 2304 (KVAV…CNGC), 2312 to 2488 (DSSF…RKGC), 2493 to 2679 (IQSV…LDTC), 2721 to 2893 (AHQF…VDRC), and 2898 to 3078 (QEGT…PHSC). The cysteines at positions 2278 and 2304 are disulfide-linked. Residue Asn2355 is glycosylated (N-linked (GlcNAc...) asparagine). Disulfide bonds link Cys2464-Cys2488 and Cys2652-Cys2679. Residue Asn2834 is glycosylated (N-linked (GlcNAc...) asparagine). An intrachain disulfide couples Cys2868 to Cys2893. An N-linked (GlcNAc...) asparagine glycan is attached at Asn2923. An intrachain disulfide couples Cys3047 to Cys3078.

Laminin is a complex glycoprotein, consisting of three different polypeptide chains (alpha, beta, gamma), which are bound to each other by disulfide bonds into a cross-shaped molecule comprising one long and three short arms with globules at each end. Alpha-1 is a subunit of laminin-1 (laminin-111 or EHS laminin) and laminin-3 (laminin-121 or S-laminin). Post-translationally, tyrosine phosphorylated by PKDCC/VLK.

It localises to the secreted. The protein resides in the extracellular space. Its subcellular location is the extracellular matrix. The protein localises to the basement membrane. Functionally, binding to cells via a high affinity receptor, laminin is thought to mediate the attachment, migration and organization of cells into tissues during embryonic development by interacting with other extracellular matrix components. The sequence is that of Laminin subunit alpha-1 (Lama1) from Mus musculus (Mouse).